Reading from the N-terminus, the 330-residue chain is tRNA (guanine-N(7)-)-methyltransferase (330 aa).

The interval 1 to 27 (MSTPPAKRQKRDQYRKRAAAAANEDTG) is disordered. The segment covering 7–18 (KRQKRDQYRKRA) has biased composition (basic residues). Residues glycine 95 and 118-119 (EI) each bind S-adenosyl-L-methionine. The interval 138 to 185 (QNQLKNSSTTASESPAPAIPAEPATDGASPDAASTPETSNSPVPGGYQ) is disordered. The segment covering 144-162 (SSTTASESPAPAIPAEPAT) has biased composition (low complexity). The segment covering 172-185 (TPETSNSPVPGGYQ) has biased composition (polar residues). Residues 193 to 194 (NT) and cysteine 213 each bind S-adenosyl-L-methionine. Aspartate 216 is an active-site residue. An S-adenosyl-L-methionine-binding site is contributed by 302-304 (TEE).

The protein belongs to the class I-like SAM-binding methyltransferase superfamily. TrmB family. As to quaternary structure, forms a complex with trm82.

It localises to the nucleus. It catalyses the reaction guanosine(46) in tRNA + S-adenosyl-L-methionine = N(7)-methylguanosine(46) in tRNA + S-adenosyl-L-homocysteine. Its pathway is tRNA modification; N(7)-methylguanine-tRNA biosynthesis. Catalyzes the formation of N(7)-methylguanine at position 46 (m7G46) in tRNA. This Aspergillus oryzae (strain ATCC 42149 / RIB 40) (Yellow koji mold) protein is tRNA (guanine-N(7)-)-methyltransferase (trm8).